The primary structure comprises 129 residues: Protein Turandot C (129 aa).

The first 21 residues, 1–21 (MNASISLLCFALLLISPFCLG), serve as a signal peptide directing secretion.

This sequence belongs to the Turandot family.

It localises to the secreted. In terms of biological role, a humoral factor that may play a role in stress tolerance. This is Protein Turandot C from Drosophila sechellia (Fruit fly).